Consider the following 87-residue polypeptide: Beta-toxin Ct1a (87 aa).

An N-terminal signal peptide occupies residues 1-19; it reads MNSLLMITACLALIGTVWA. The LCN-type CS-alpha/beta domain occupies 20–85; the sequence is KEGYLVNHST…VWPLPKKTCN (66 aa). 4 disulfides stabilise this stretch: C31–C84, C35–C60, C44–C65, and C48–C67. At N85 the chain carries Asparagine amide.

Belongs to the long (4 C-C) scorpion toxin superfamily. Sodium channel inhibitor family. Beta subfamily. Expressed by the venom gland.

It localises to the secreted. Functionally, beta toxins bind voltage-independently at site-4 of sodium channels (Nav) and shift the voltage of activation toward more negative potentials thereby affecting sodium channel activation and promoting spontaneous and repetitive firing. Is lethal to mice but does not show toxicity to freshwater shrimp and crickets. The protein is Beta-toxin Ct1a of Centruroides tecomanus (Scorpion).